A 354-amino-acid chain; its full sequence is Uroporphyrinogen decarboxylase (354 aa).

Residues 27 to 31, aspartate 77, tyrosine 154, serine 209, and histidine 327 contribute to the substrate site; that span reads RQAGR.

It belongs to the uroporphyrinogen decarboxylase family. In terms of assembly, homodimer.

It localises to the cytoplasm. It catalyses the reaction uroporphyrinogen III + 4 H(+) = coproporphyrinogen III + 4 CO2. The protein operates within porphyrin-containing compound metabolism; protoporphyrin-IX biosynthesis; coproporphyrinogen-III from 5-aminolevulinate: step 4/4. Functionally, catalyzes the decarboxylation of four acetate groups of uroporphyrinogen-III to yield coproporphyrinogen-III. The protein is Uroporphyrinogen decarboxylase of Shewanella amazonensis (strain ATCC BAA-1098 / SB2B).